A 118-amino-acid polypeptide reads, in one-letter code: Class I hydrophobin hum2 (118 aa).

Positions 1-19 are cleaved as a signal peptide; the sequence is MQFKTIFATLAAFAAVASA. 4 disulfide bridges follow: Cys-33–Cys-98, Cys-40–Cys-92, Cys-41–Cys-74, and Cys-99–Cys-112.

The protein belongs to the fungal hydrophobin family. In terms of assembly, self-assembles to form functional amyloid fibrils called rodlets. Self-assembly into fibrillar rodlets occurs spontaneously at hydrophobic:hydrophilic interfaces and the rodlets further associate laterally to form amphipathic monolayers.

It localises to the secreted. The protein localises to the cell wall. In terms of biological role, aerial growth, conidiation, and dispersal of filamentous fungi in the environment rely upon a capability of their secreting small amphipathic proteins called hydrophobins (HPBs) with low sequence identity. Class I can self-assemble into an outermost layer of rodlet bundles on aerial cell surfaces, conferring cellular hydrophobicity that supports fungal growth, development and dispersal; whereas Class II form highly ordered films at water-air interfaces through intermolecular interactions but contribute nothing to the rodlet structure. Hum2 is a class I hydrophobin which that plays a role in, but seems not to be crucial for the formation of aerial hyphae. Hydrophobins of Mycosarcoma maydis have been functionally replaced, at least partially, by repellents. The protein is Class I hydrophobin hum2 of Mycosarcoma maydis (Corn smut fungus).